The chain runs to 437 residues: Ribosomal protein uS12 methylthiotransferase RimO (437 aa).

The MTTase N-terminal domain occupies Asn9–Lys128. [4Fe-4S] cluster-binding residues include Cys18, Cys57, Cys91, Cys152, Cys156, and Cys159. The Radical SAM core domain maps to Thr138–Asp368. One can recognise a TRAM domain in the interval Gln371 to Ala437.

Belongs to the methylthiotransferase family. RimO subfamily. [4Fe-4S] cluster is required as a cofactor.

Its subcellular location is the cytoplasm. The enzyme catalyses L-aspartate(89)-[ribosomal protein uS12]-hydrogen + (sulfur carrier)-SH + AH2 + 2 S-adenosyl-L-methionine = 3-methylsulfanyl-L-aspartate(89)-[ribosomal protein uS12]-hydrogen + (sulfur carrier)-H + 5'-deoxyadenosine + L-methionine + A + S-adenosyl-L-homocysteine + 2 H(+). Functionally, catalyzes the methylthiolation of an aspartic acid residue of ribosomal protein uS12. The sequence is that of Ribosomal protein uS12 methylthiotransferase RimO from Flavobacterium johnsoniae (strain ATCC 17061 / DSM 2064 / JCM 8514 / BCRC 14874 / CCUG 350202 / NBRC 14942 / NCIMB 11054 / UW101) (Cytophaga johnsonae).